We begin with the raw amino-acid sequence, 188 residues long: Inosine triphosphate pyrophosphatase (188 aa).

7 to 12 serves as a coordination point for ITP; sequence TGNAGK. Position 36 (Glu36) interacts with Mg(2+). ITP contacts are provided by residues Lys48, 64–65, Lys81, 140–143, Lys163, and 168–169; these read DT, FGWN, and HR.

The protein belongs to the HAM1 NTPase family. In terms of assembly, homodimer. Mg(2+) is required as a cofactor. It depends on Mn(2+) as a cofactor.

The protein resides in the cytoplasm. The protein localises to the nucleus. The catalysed reaction is ITP + H2O = IMP + diphosphate + H(+). It carries out the reaction dITP + H2O = dIMP + diphosphate + H(+). The enzyme catalyses XTP + H2O = XMP + diphosphate + H(+). Pyrophosphatase that hydrolyzes non-canonical purine nucleotides such as inosine triphosphate (ITP), deoxyinosine triphosphate (dITP) or xanthosine 5'-triphosphate (XTP) to their respective monophosphate derivatives. The enzyme does not distinguish between the deoxy- and ribose forms. Probably excludes non-canonical purines from RNA and DNA precursor pools, thus preventing their incorporation into RNA and DNA and avoiding chromosomal lesions. In Yarrowia lipolytica (strain CLIB 122 / E 150) (Yeast), this protein is Inosine triphosphate pyrophosphatase.